Reading from the N-terminus, the 374-residue chain is Putative zinc finger MYND domain-containing protein R331 (374 aa).

The Zn(2+) site is built by Cys-328, Cys-331, Cys-341, Cys-344, Cys-350, Cys-354, His-362, and Cys-366. The MYND-type zinc-finger motif lies at 328–366 (CFYCNKNIEKPVVCNKCFRIKYCSEKCQSEYNSYHSDDC).

This Acanthamoeba polyphaga (Amoeba) protein is Putative zinc finger MYND domain-containing protein R331.